A 174-amino-acid polypeptide reads, in one-letter code: 3-hydroxydecanoyl-[acyl-carrier-protein] dehydratase (174 aa).

Residue histidine 71 is part of the active site.

Belongs to the thioester dehydratase family. FabA subfamily. In terms of assembly, homodimer.

The protein localises to the cytoplasm. It catalyses the reaction a (3R)-hydroxyacyl-[ACP] = a (2E)-enoyl-[ACP] + H2O. The enzyme catalyses (3R)-hydroxydecanoyl-[ACP] = (2E)-decenoyl-[ACP] + H2O. The catalysed reaction is (2E)-decenoyl-[ACP] = (3Z)-decenoyl-[ACP]. It functions in the pathway lipid metabolism; fatty acid biosynthesis. Functionally, necessary for the introduction of cis unsaturation into fatty acids. Catalyzes the dehydration of (3R)-3-hydroxydecanoyl-ACP to E-(2)-decenoyl-ACP and then its isomerization to Z-(3)-decenoyl-ACP. Can catalyze the dehydratase reaction for beta-hydroxyacyl-ACPs with saturated chain lengths up to 16:0, being most active on intermediate chain length. This is 3-hydroxydecanoyl-[acyl-carrier-protein] dehydratase from Nitrobacter hamburgensis (strain DSM 10229 / NCIMB 13809 / X14).